A 593-amino-acid chain; its full sequence is Arginine--tRNA ligase (593 aa).

Positions 138–148 (ANPTGPLHVGH) match the 'HIGH' region motif.

The protein belongs to the class-I aminoacyl-tRNA synthetase family. As to quaternary structure, monomer.

It is found in the cytoplasm. The enzyme catalyses tRNA(Arg) + L-arginine + ATP = L-arginyl-tRNA(Arg) + AMP + diphosphate. The protein is Arginine--tRNA ligase of Burkholderia ambifaria (strain ATCC BAA-244 / DSM 16087 / CCUG 44356 / LMG 19182 / AMMD) (Burkholderia cepacia (strain AMMD)).